The sequence spans 132 residues: Small ribosomal subunit protein uS19 (132 aa).

This sequence belongs to the universal ribosomal protein uS19 family.

Functionally, protein S19 forms a complex with S13 that binds strongly to the 16S ribosomal RNA. The protein is Small ribosomal subunit protein uS19 (rps19) of Pyrococcus abyssi (strain GE5 / Orsay).